A 461-amino-acid polypeptide reads, in one-letter code: Bifunctional protein GlmU (461 aa).

Residues 1–229 (MLKKEINVVI…CKEILGVNNK (229 aa)) form a pyrophosphorylase region. Residues 11-14 (LAAG), lysine 25, glutamine 76, 81-82 (GT), 103-105 (YGD), glycine 140, glutamate 154, and asparagine 227 contribute to the UDP-N-acetyl-alpha-D-glucosamine site. Aspartate 105 is a binding site for Mg(2+). Asparagine 227 serves as a coordination point for Mg(2+). The linker stretch occupies residues 230–250 (LQLSILEKIFRKKQVNDLLLS). The N-acetyltransferase stretch occupies residues 251 to 461 (GVTLKDPNHF…PQKIIKKTDQ (211 aa)). Positions 333 and 351 each coordinate UDP-N-acetyl-alpha-D-glucosamine. Histidine 363 serves as the catalytic Proton acceptor. 2 residues coordinate UDP-N-acetyl-alpha-D-glucosamine: tyrosine 366 and asparagine 377. Acetyl-CoA is bound by residues alanine 380, 386–387 (NY), and alanine 423.

The protein in the N-terminal section; belongs to the N-acetylglucosamine-1-phosphate uridyltransferase family. This sequence in the C-terminal section; belongs to the transferase hexapeptide repeat family. In terms of assembly, homotrimer. Requires Mg(2+) as cofactor.

Its subcellular location is the cytoplasm. It carries out the reaction alpha-D-glucosamine 1-phosphate + acetyl-CoA = N-acetyl-alpha-D-glucosamine 1-phosphate + CoA + H(+). The catalysed reaction is N-acetyl-alpha-D-glucosamine 1-phosphate + UTP + H(+) = UDP-N-acetyl-alpha-D-glucosamine + diphosphate. It functions in the pathway nucleotide-sugar biosynthesis; UDP-N-acetyl-alpha-D-glucosamine biosynthesis; N-acetyl-alpha-D-glucosamine 1-phosphate from alpha-D-glucosamine 6-phosphate (route II): step 2/2. It participates in nucleotide-sugar biosynthesis; UDP-N-acetyl-alpha-D-glucosamine biosynthesis; UDP-N-acetyl-alpha-D-glucosamine from N-acetyl-alpha-D-glucosamine 1-phosphate: step 1/1. Its pathway is bacterial outer membrane biogenesis; LPS lipid A biosynthesis. Catalyzes the last two sequential reactions in the de novo biosynthetic pathway for UDP-N-acetylglucosamine (UDP-GlcNAc). The C-terminal domain catalyzes the transfer of acetyl group from acetyl coenzyme A to glucosamine-1-phosphate (GlcN-1-P) to produce N-acetylglucosamine-1-phosphate (GlcNAc-1-P), which is converted into UDP-GlcNAc by the transfer of uridine 5-monophosphate (from uridine 5-triphosphate), a reaction catalyzed by the N-terminal domain. The chain is Bifunctional protein GlmU from Buchnera aphidicola subsp. Schizaphis graminum (strain Sg).